The sequence spans 437 residues: MTPNTDLNIPLFERAKALIPGGVNSPVRAFKAVGGTPRFVKRARGAYFWDANDQRFIDYIGSWGPMILGHGHPAVLEAVQQAALEGLSFGAPTERELELAEAILRLLPSMQMIRLVSSGTEAGMSAIRLARGATGRSKLIKFEGCYHGHADALLVKAGSGLATFGNATSAGVPAEVVQHTLVLEYNSIEQLERAFALHGKELACLIIEPIAGNMNLVRASVPFMRRCRELCSEYGALLVLDEVMTGFRVAPGGAQSLYARDIPGFQPDLTVLGKVIGGGMPLAAFGGSRALMEHLAPLGAVYQAGTLSGNPVATACGLATLRAIGQPGFFAALSARTRALVEGLRGAAAAEGVAFSADSEGGMFGFFLLPALPRNYAQVLQTDSARFNQLFHGLLERGIYIAPALYEAGFVSAAHSDEDIAATVAAAREVFKTLAKP.

Lys-274 is modified (N6-(pyridoxal phosphate)lysine).

It belongs to the class-III pyridoxal-phosphate-dependent aminotransferase family. HemL subfamily. Homodimer. Requires pyridoxal 5'-phosphate as cofactor.

It localises to the cytoplasm. The catalysed reaction is (S)-4-amino-5-oxopentanoate = 5-aminolevulinate. Its pathway is porphyrin-containing compound metabolism; protoporphyrin-IX biosynthesis; 5-aminolevulinate from L-glutamyl-tRNA(Glu): step 2/2. The chain is Glutamate-1-semialdehyde 2,1-aminomutase from Verminephrobacter eiseniae (strain EF01-2).